We begin with the raw amino-acid sequence, 278 residues long: Large ribosomal subunit protein uL2 (278 aa).

Disordered stretches follow at residues 27-58 (STPEKSLVRPLHGKGGRNAHGRITTRHKGGGH) and 224-278 (VVMN…GKKR). Residues 37-58 (LHGKGGRNAHGRITTRHKGGGH) show a composition bias toward basic residues. Positions 253–268 (PEGRTRKPNKPSDKLI) are enriched in basic and acidic residues. Residues 269–278 (VRRRRTGKKR) are compositionally biased toward basic residues.

This sequence belongs to the universal ribosomal protein uL2 family. Part of the 50S ribosomal subunit. Forms a bridge to the 30S subunit in the 70S ribosome.

One of the primary rRNA binding proteins. Required for association of the 30S and 50S subunits to form the 70S ribosome, for tRNA binding and peptide bond formation. It has been suggested to have peptidyltransferase activity; this is somewhat controversial. Makes several contacts with the 16S rRNA in the 70S ribosome. The polypeptide is Large ribosomal subunit protein uL2 (Mycobacterium sp. (strain KMS)).